A 180-amino-acid polypeptide reads, in one-letter code: Ribulose bisphosphate carboxylase small subunit, chloroplastic 2 (180 aa).

A chloroplast-targeting transit peptide spans methionine 1–glutamine 56.

This sequence belongs to the RuBisCO small chain family. In terms of assembly, heterohexadecamer of 8 large and 8 small subunits.

Its subcellular location is the plastid. It localises to the chloroplast. RuBisCO catalyzes two reactions: the carboxylation of D-ribulose 1,5-bisphosphate, the primary event in carbon dioxide fixation, as well as the oxidative fragmentation of the pentose substrate. Both reactions occur simultaneously and in competition at the same active site. Although the small subunit is not catalytic it is essential for maximal activity. In Spinacia oleracea (Spinach), this protein is Ribulose bisphosphate carboxylase small subunit, chloroplastic 2.